The following is a 377-amino-acid chain: Queuine tRNA-ribosyltransferase (377 aa).

Asp91 acts as the Proton acceptor in catalysis. Residues 91 to 95, Asp145, Gln189, and Gly216 each bind substrate; that span reads DSGGF. An RNA binding region spans residues 247–253; it reads GVGKPED. Asp266 functions as the Nucleophile in the catalytic mechanism. An RNA binding; important for wobble base 34 recognition region spans residues 271–275; the sequence is TRNAR. Residues Cys304, Cys306, Cys309, and His335 each coordinate Zn(2+).

Belongs to the queuine tRNA-ribosyltransferase family. Homodimer. Within each dimer, one monomer is responsible for RNA recognition and catalysis, while the other monomer binds to the replacement base PreQ1. Zn(2+) serves as cofactor.

It catalyses the reaction 7-aminomethyl-7-carbaguanine + guanosine(34) in tRNA = 7-aminomethyl-7-carbaguanosine(34) in tRNA + guanine. The protein operates within tRNA modification; tRNA-queuosine biosynthesis. Catalyzes the base-exchange of a guanine (G) residue with the queuine precursor 7-aminomethyl-7-deazaguanine (PreQ1) at position 34 (anticodon wobble position) in tRNAs with GU(N) anticodons (tRNA-Asp, -Asn, -His and -Tyr). Catalysis occurs through a double-displacement mechanism. The nucleophile active site attacks the C1' of nucleotide 34 to detach the guanine base from the RNA, forming a covalent enzyme-RNA intermediate. The proton acceptor active site deprotonates the incoming PreQ1, allowing a nucleophilic attack on the C1' of the ribose to form the product. After dissociation, two additional enzymatic reactions on the tRNA convert PreQ1 to queuine (Q), resulting in the hypermodified nucleoside queuosine (7-(((4,5-cis-dihydroxy-2-cyclopenten-1-yl)amino)methyl)-7-deazaguanosine). This chain is Queuine tRNA-ribosyltransferase, found in Vibrio parahaemolyticus serotype O3:K6 (strain RIMD 2210633).